The sequence spans 783 residues: Lon protease (783 aa).

Residues 16–210 (LPLLASRGVV…KLLEIIKDEI (195 aa)) enclose the Lon N-terminal domain. ATP is bound at residue 361-368 (GAPGVGKT). The region spanning 597-778 (KDRVGVATGM…DQVLDLILGG (182 aa)) is the Lon proteolytic domain. Residues Ser-684 and Lys-727 contribute to the active site.

Belongs to the peptidase S16 family. In terms of assembly, homohexamer. Organized in a ring with a central cavity.

The protein localises to the cytoplasm. It catalyses the reaction Hydrolysis of proteins in presence of ATP.. Its function is as follows. ATP-dependent serine protease that mediates the selective degradation of mutant and abnormal proteins as well as certain short-lived regulatory proteins. Required for cellular homeostasis and for survival from DNA damage and developmental changes induced by stress. Degrades polypeptides processively to yield small peptide fragments that are 5 to 10 amino acids long. Binds to DNA in a double-stranded, site-specific manner. The polypeptide is Lon protease (Halothermothrix orenii (strain H 168 / OCM 544 / DSM 9562)).